A 1124-amino-acid polypeptide reads, in one-letter code: Sodium/hydrogen exchanger 11 (1124 aa).

The next 11 membrane-spanning stretches (helical) occupy residues 25 to 45 (LVEE…GGLL), 52 to 72 (CEVI…HMAY), 90 to 110 (FSLY…DVEF), 120 to 140 (VLLT…YVVI), 179 to 199 (IYID…SIFF), 224 to 244 (DILG…CILA), 254 to 274 (IILC…LGMS), 305 to 325 (IFSS…IGCG), 335 to 355 (IPFI…TILL), 372 to 392 (GVVI…APDV), and 405 to 425 (MFIL…SYVM). N-linked (GlcNAc...) asparagine glycans are attached at residues Asn447 and Asn473. The next 4 helical transmembrane spans lie at 612 to 632 (TGQI…WPMA), 641 to 661 (ISIN…KIII), 674 to 694 (LEFF…FVKL), and 706 to 726 (VIMG…IVPI). Residues 642 to 723 (SINYYFMFLY…IRFLPLFKII (82 aa)) form an ion transport-like region. 867–999 (IWLEGKDVLI…EYKIWLKLAL (133 aa)) provides a ligand contact to a nucleoside 3',5'-cyclic phosphate.

The protein belongs to the monovalent cation:proton antiporter 1 (CPA1) transporter (TC 2.A.36) family.

It is found in the membrane. In terms of biological role, involved in pH regulation. This chain is Sodium/hydrogen exchanger 11 (SLC9C2), found in Homo sapiens (Human).